Reading from the N-terminus, the 484-residue chain is Calcium-dependent protein kinase 31 (484 aa).

Gly-2 carries the N-myristoyl glycine lipid modification. Residues 28 to 290 (YILGDELGQG…AAEVLGHPWM (263 aa)) form the Protein kinase domain. ATP-binding positions include 34-42 (LGQGQFGIT) and Lys-57. Catalysis depends on Asp-156, which acts as the Proton acceptor. A Phosphoserine modification is found at Ser-196. Positions 295–325 (ASDKPIDGVVLSRLKQFRDMNKLKKVALKVI) are autoinhibitory domain. 4 consecutive EF-hand domains span residues 332–367 (EEIK…LGSN), 368–403 (LSKT…RYRL), 404–439 (DRDD…HGVG), and 444–474 (IKQI…GSSL). Asp-345, Asp-347, Ser-349, Thr-351, Glu-356, Asp-381, Asp-383, Asn-385, Thr-387, Glu-392, Asp-417, Asp-419, Asp-421, His-423, Glu-428, Asp-452, Asp-454, Asp-456, Lys-458, and Glu-463 together coordinate Ca(2+).

It belongs to the protein kinase superfamily. Ser/Thr protein kinase family. CDPK subfamily.

It is found in the membrane. The enzyme catalyses L-seryl-[protein] + ATP = O-phospho-L-seryl-[protein] + ADP + H(+). It catalyses the reaction L-threonyl-[protein] + ATP = O-phospho-L-threonyl-[protein] + ADP + H(+). With respect to regulation, activated by calcium. Autophosphorylation may play an important role in the regulation of the kinase activity. In terms of biological role, may play a role in signal transduction pathways that involve calcium as a second messenger. This chain is Calcium-dependent protein kinase 31 (CPK31), found in Arabidopsis thaliana (Mouse-ear cress).